A 386-amino-acid chain; its full sequence is Succinate--CoA ligase [ADP-forming] subunit beta (386 aa).

Positions 9–244 (KEILRKYGVP…HDEEDPLETR (236 aa)) constitute an ATP-grasp domain. ATP-binding positions include Lys-46, 53–55 (GRG), Glu-99, Cys-102, and Glu-107. The Mg(2+) site is built by Asn-199 and Asp-213. Residues Asn-264 and 321–323 (GIM) contribute to the substrate site.

Belongs to the succinate/malate CoA ligase beta subunit family. In terms of assembly, heterotetramer of two alpha and two beta subunits. It depends on Mg(2+) as a cofactor.

The catalysed reaction is succinate + ATP + CoA = succinyl-CoA + ADP + phosphate. The enzyme catalyses GTP + succinate + CoA = succinyl-CoA + GDP + phosphate. Its pathway is carbohydrate metabolism; tricarboxylic acid cycle; succinate from succinyl-CoA (ligase route): step 1/1. Functionally, succinyl-CoA synthetase functions in the citric acid cycle (TCA), coupling the hydrolysis of succinyl-CoA to the synthesis of either ATP or GTP and thus represents the only step of substrate-level phosphorylation in the TCA. The beta subunit provides nucleotide specificity of the enzyme and binds the substrate succinate, while the binding sites for coenzyme A and phosphate are found in the alpha subunit. This is Succinate--CoA ligase [ADP-forming] subunit beta from Rickettsia conorii (strain ATCC VR-613 / Malish 7).